The following is a 297-amino-acid chain: Coatomer subunit epsilon-2 (297 aa).

The protein belongs to the COPE family. As to quaternary structure, oligomeric complex that consists of at least the alpha, beta, beta', gamma, delta, epsilon and zeta subunits.

The protein resides in the cytoplasm. It is found in the golgi apparatus membrane. Its subcellular location is the cytoplasmic vesicle. It localises to the COPI-coated vesicle membrane. The coatomer is a cytosolic protein complex that binds to dilysine motifs and reversibly associates with Golgi non-clathrin-coated vesicles, which further mediate biosynthetic protein transport from the ER, via the Golgi up to the trans Golgi network. The coatomer complex is required for budding from Golgi membranes, and is essential for the retrograde Golgi-to-ER transport of dilysine-tagged proteins. The sequence is that of Coatomer subunit epsilon-2 from Oryza sativa subsp. japonica (Rice).